The following is a 24-amino-acid chain: Positive regulator of RepFIC repA1 expression (24 aa).

The protein is Positive regulator of RepFIC repA1 expression (repL) of Escherichia coli (strain K12).